We begin with the raw amino-acid sequence, 193 residues long: Bifunctional protein PyrR (193 aa).

Residues 57–58 (TR), R98, 119–127 (DDVLYSGRS), R152, and V176 contribute to the substrate site. A PRPP-binding motif is present at residues 115–127 (VILVDDVLYSGRS).

It belongs to the purine/pyrimidine phosphoribosyltransferase family. PyrR subfamily.

It carries out the reaction UMP + diphosphate = 5-phospho-alpha-D-ribose 1-diphosphate + uracil. In terms of biological role, regulates the transcription of the pyrimidine nucleotide (pyr) operon in response to exogenous pyrimidines. Also displays a weak uracil phosphoribosyltransferase activity which is not physiologically significant. The protein is Bifunctional protein PyrR of Mycobacterium bovis (strain ATCC BAA-935 / AF2122/97).